Consider the following 334-residue polypeptide: Dihydroorotate dehydrogenase (quinone) (334 aa).

FMN-binding positions include 59 to 63 (AGLDK) and T83. K63 lines the substrate pocket. 108–112 (NRMGF) contributes to the substrate binding site. Positions 136 and 169 each coordinate FMN. N169 is a substrate binding site. S172 (nucleophile) is an active-site residue. Residue N174 coordinates substrate. FMN is bound by residues K214 and T242. 243–244 (NT) is a binding site for substrate. Residues G265, G294, and 315-316 (YS) contribute to the FMN site.

The protein belongs to the dihydroorotate dehydrogenase family. Type 2 subfamily. In terms of assembly, monomer. FMN serves as cofactor.

The protein resides in the cell membrane. The catalysed reaction is (S)-dihydroorotate + a quinone = orotate + a quinol. It functions in the pathway pyrimidine metabolism; UMP biosynthesis via de novo pathway; orotate from (S)-dihydroorotate (quinone route): step 1/1. Its function is as follows. Catalyzes the conversion of dihydroorotate to orotate with quinone as electron acceptor. This is Dihydroorotate dehydrogenase (quinone) from Acinetobacter baumannii (strain AB0057).